The primary structure comprises 448 residues: Glutamate--tRNA ligase 1 (448 aa).

Residues 10–20 (PSPTGMLHVGN) carry the 'HIGH' region motif. The 'KMSKS' region motif lies at 240 to 244 (KISKR). K243 is a binding site for ATP.

This sequence belongs to the class-I aminoacyl-tRNA synthetase family. Glutamate--tRNA ligase type 1 subfamily. As to quaternary structure, monomer.

The protein resides in the cytoplasm. It catalyses the reaction tRNA(Glu) + L-glutamate + ATP = L-glutamyl-tRNA(Glu) + AMP + diphosphate. Its function is as follows. Catalyzes the attachment of glutamate to tRNA(Glu) in a two-step reaction: glutamate is first activated by ATP to form Glu-AMP and then transferred to the acceptor end of tRNA(Glu). The sequence is that of Glutamate--tRNA ligase 1 from Rickettsia typhi (strain ATCC VR-144 / Wilmington).